Consider the following 324-residue polypeptide: Anthranilate phosphoribosyltransferase (324 aa).

Residues Gly-75, 78-79, Thr-83, 85-88, 102-110, and Ser-114 contribute to the 5-phospho-alpha-D-ribose 1-diphosphate site; these read GD, NVST, and KHGNFGITG. Gly-75 provides a ligand contact to anthranilate. Ser-87 provides a ligand contact to Mg(2+). Asn-105 is an anthranilate binding site. Arg-160 provides a ligand contact to anthranilate. 2 residues coordinate Mg(2+): Asp-216 and Glu-217.

This sequence belongs to the anthranilate phosphoribosyltransferase family. In terms of assembly, homodimer. The cofactor is Mg(2+).

It carries out the reaction N-(5-phospho-beta-D-ribosyl)anthranilate + diphosphate = 5-phospho-alpha-D-ribose 1-diphosphate + anthranilate. It functions in the pathway amino-acid biosynthesis; L-tryptophan biosynthesis; L-tryptophan from chorismate: step 2/5. Catalyzes the transfer of the phosphoribosyl group of 5-phosphorylribose-1-pyrophosphate (PRPP) to anthranilate to yield N-(5'-phosphoribosyl)-anthranilate (PRA). In Picrophilus torridus (strain ATCC 700027 / DSM 9790 / JCM 10055 / NBRC 100828 / KAW 2/3), this protein is Anthranilate phosphoribosyltransferase.